We begin with the raw amino-acid sequence, 427 residues long: ATP-sensitive inward rectifier potassium channel 12 (427 aa).

At 1–77 (MTAASRANPY…LADMFTTCVD (77 aa)) the chain is on the cytoplasmic side. Residue C75 is modified to S-nitrosocysteine. A helical transmembrane segment spans residues 78–104 (IRWRYMLLIFSLAFLASWLLFGIIFWV). 2 residues coordinate a 1,2-diacyl-sn-glycero-3-phospho-(1D-myo-inositol-4,5-bisphosphate): R79 and R81. Residues 105–129 (IAVAHGDLEPAEGRGRTPCVLQVHG) are Extracellular-facing. A disulfide bridge links C123 with C155. Positions 130–146 (FMAAFLFSIETQTTIGY) form an intramembrane region, helical; Pore-forming. K(+) contacts are provided by T143, I144, G145, and Y146. The short motif at 143–148 (TIGYGL) is the Selectivity filter element. At 147–155 (GLRCVTEEC) the chain is on the extracellular side. Residues 156-183 (PVAVFMVVAQSIVGCIIDSFMIGAIMAK) form a helical membrane-spanning segment. Residues K183 and K188 each coordinate a 1,2-diacyl-sn-glycero-3-phospho-(1D-myo-inositol-4,5-bisphosphate). Residues 184–427 (MGRPKKRAQT…ERPYRRESEI (244 aa)) lie on the Cytoplasmic side of the membrane. Residues 387 to 427 (DEEDEVATDRDGRSPQPEHDFDRLQASSGALERPYRRESEI) are disordered. Residues 393-409 (ATDRDGRSPQPEHDFDR) are compositionally biased toward basic and acidic residues. Positions 425 to 427 (SEI) match the PDZ-binding motif.

It belongs to the inward rectifier-type potassium channel (TC 1.A.2.1) family. KCNJ12 subfamily. Homotetramer. Forms heteromer with KCNJ4. Can form heteromeric channels with Kir2.6/KCNJ18. Association, via its PDZ-recognition domain, with LIN7A, LIN7B, LIN7C, DLG1, CASK and APBA1 plays a key role in its localization and trafficking. In terms of tissue distribution, highest level in cerebellum. Moderately found in kidney, forebrain and skeletal muscle. Not detected in uterus, liver and pancreas.

The protein resides in the membrane. It is found in the cell membrane. It localises to the sarcolemma. The protein localises to the T-tubule. It catalyses the reaction K(+)(in) = K(+)(out). With respect to regulation, activated by phosphatidylinositol 4,5-biphosphate (PtdIns(4,5)P2). PtdIns(4,5)P2 binding to the cytoplasmic side of the channel triggers a conformation change leading to channel opening. Inhibited by Ba(2+). Its function is as follows. Inward rectifying potassium channel that probably participates in controlling the resting membrane potential in electrically excitable cells. It probably participates in establishing action potential waveform and excitability of neuronal and muscle tissues. Inward rectifier potassium channels are characterized by a greater tendency to allow potassium to flow into the cell rather than out of it. Their voltage dependence is regulated by the concentration of extracellular potassium; as external potassium is raised, the voltage range of the channel opening shifts to more positive voltages. The inward rectification is mainly due to the blockage of outward current by internal magnesium. The protein is ATP-sensitive inward rectifier potassium channel 12 (Kcnj12) of Rattus norvegicus (Rat).